Consider the following 303-residue polypeptide: Acetylglutamate kinase (303 aa).

Substrate-binding positions include 76–77 (GG), Arg-98, and Asn-192.

It belongs to the acetylglutamate kinase family. ArgB subfamily.

The protein localises to the cytoplasm. It carries out the reaction N-acetyl-L-glutamate + ATP = N-acetyl-L-glutamyl 5-phosphate + ADP. Its pathway is amino-acid biosynthesis; L-arginine biosynthesis; N(2)-acetyl-L-ornithine from L-glutamate: step 2/4. In terms of biological role, catalyzes the ATP-dependent phosphorylation of N-acetyl-L-glutamate. The chain is Acetylglutamate kinase from Chlorobium phaeobacteroides (strain DSM 266 / SMG 266 / 2430).